The primary structure comprises 1755 residues: Transposon Ty1-OL Gag-Pol polyprotein (1755 aa).

3 stretches are compositionally biased toward polar residues: residues 1–23 (MESQ…SVTS), 48–60 (TKAN…TPAS), and 127–152 (QSQF…GNTF). Disordered stretches follow at residues 1–93 (MESQ…MMTQ), 126–173 (PQSQ…RPPP), and 352–421 (GSRN…SKST). Over residues 153-165 (TDSSSADSDMTST) the composition is skewed to low complexity. The RNA-binding stretch occupies residues 299 to 401 (NNGIHINNKV…NSKSKTARAH (103 aa)). Residues 402–418 (NVSTSNNSPSTDNDSIS) show a composition bias toward low complexity. S416 bears the Phosphoserine mark. Catalysis depends on D461, which acts as the For protease activity; shared with dimeric partner. The interval 583-640 (NVHTSESTRKYPYPFIHRMLAHANAQTIRYSLKNNTITYFNESDVDWSSAIDYQCPDC) is integrase-type zinc finger-like. The 176-residue stretch at 660–835 (NSYEPFQYLH…AGLDISTLLP (176 aa)) folds into the Integrase catalytic domain. Positions 671 and 736 each coordinate Mg(2+). 3 disordered regions span residues 956–1087 (SKAV…ETEK), 1092–1111 (RSPS…NIVP), and 1130–1171 (DLPL…DSNA). Residues 960–969 (SPTDSTPPST) show a composition bias toward low complexity. A compositionally biased stretch (polar residues) spans 1005 to 1015 (STPQISNIEST). The segment covering 1038 to 1053 (ESSHASKSKDFRHSDS) has biased composition (basic and acidic residues). 2 stretches are compositionally biased toward polar residues: residues 1054 to 1082 (YSEN…QISD) and 1101 to 1111 (PENNSSHNIVP). Positions 1178-1212 (KKRSLEDNETEIKVSRDTWNTKNMRSLEPPRSKKR) match the Bipartite nuclear localization signal motif. Residues 1338–1476 (NNYYITQLDI…DILGLEIKYQ (139 aa)) enclose the Reverse transcriptase Ty1/copia-type domain. Mg(2+) is bound by residues D1346, D1427, D1428, D1610, E1652, and D1685. In terms of domain architecture, RNase H Ty1/copia-type spans 1610–1752 (DASYGNQPYY…IKTFKLLTNK (143 aa)).

In terms of assembly, the capsid protein forms a homotrimer, from which the VLPs are assembled. The protease is a homodimer, whose active site consists of two apposed aspartic acid residues. Post-translationally, initially, virus-like particles (VLPs) are composed of the structural unprocessed proteins Gag and Gag-Pol, and also contain the host initiator methionine tRNA (tRNA(i)-Met) which serves as a primer for minus-strand DNA synthesis, and a dimer of genomic Ty RNA. Processing of the polyproteins occurs within the particle and proceeds by an ordered pathway, called maturation. First, the protease (PR) is released by autocatalytic cleavage of the Gag-Pol polyprotein yielding capsid protein p45 and a Pol-p154 precursor protein. This cleavage is a prerequisite for subsequent processing of Pol-p154 at the remaining sites to release the mature structural and catalytic proteins. Maturation takes place prior to the RT reaction and is required to produce transposition-competent VLPs.

It is found in the cytoplasm. Its subcellular location is the nucleus. It carries out the reaction DNA(n) + a 2'-deoxyribonucleoside 5'-triphosphate = DNA(n+1) + diphosphate. It catalyses the reaction Endonucleolytic cleavage to 5'-phosphomonoester.. Capsid protein (CA) is the structural component of the virus-like particle (VLP), forming the shell that encapsulates the retrotransposons dimeric RNA genome. The particles are assembled from trimer-clustered units and there are holes in the capsid shells that allow for the diffusion of macromolecules. CA also has nucleocapsid-like chaperone activity, promoting primer tRNA(i)-Met annealing to the multipartite primer-binding site (PBS), dimerization of Ty1 RNA and initiation of reverse transcription. In terms of biological role, the aspartyl protease (PR) mediates the proteolytic cleavages of the Gag and Gag-Pol polyproteins after assembly of the VLP. Functionally, reverse transcriptase/ribonuclease H (RT) is a multifunctional enzyme that catalyzes the conversion of the retro-elements RNA genome into dsDNA within the VLP. The enzyme displays a DNA polymerase activity that can copy either DNA or RNA templates, and a ribonuclease H (RNase H) activity that cleaves the RNA strand of RNA-DNA heteroduplexes during plus-strand synthesis and hydrolyzes RNA primers. The conversion leads to a linear dsDNA copy of the retrotransposon that includes long terminal repeats (LTRs) at both ends. Its function is as follows. Integrase (IN) targets the VLP to the nucleus, where a subparticle preintegration complex (PIC) containing at least integrase and the newly synthesized dsDNA copy of the retrotransposon must transit the nuclear membrane. Once in the nucleus, integrase performs the integration of the dsDNA into the host genome. The chain is Transposon Ty1-OL Gag-Pol polyprotein (TY1B-OL) from Saccharomyces cerevisiae (strain ATCC 204508 / S288c) (Baker's yeast).